The following is a 66-amino-acid chain: MDKHARGDADLPPLTDHVDTDALDTLFGRDTPGAPRVSGASLEFDYADFVVTVESVGRIEVRDAGR.

Involved in cell-shape determination. Required for the formation of disks. In Haloferax volcanii (strain ATCC 29605 / DSM 3757 / JCM 8879 / NBRC 14742 / NCIMB 2012 / VKM B-1768 / DS2) (Halobacterium volcanii), this protein is Disk-determining factor A.